Here is a 307-residue protein sequence, read N- to C-terminus: 4-hydroxythreonine-4-phosphate dehydrogenase (307 aa).

Residues His-126 and Thr-127 each coordinate substrate. Residues His-156, His-195, and His-251 each coordinate a divalent metal cation. Positions 259, 268, and 277 each coordinate substrate.

The protein belongs to the PdxA family. Homodimer. Zn(2+) is required as a cofactor. The cofactor is Mg(2+). Requires Co(2+) as cofactor.

The protein resides in the cytoplasm. The catalysed reaction is 4-(phosphooxy)-L-threonine + NAD(+) = 3-amino-2-oxopropyl phosphate + CO2 + NADH. It participates in cofactor biosynthesis; pyridoxine 5'-phosphate biosynthesis; pyridoxine 5'-phosphate from D-erythrose 4-phosphate: step 4/5. Its function is as follows. Catalyzes the NAD(P)-dependent oxidation of 4-(phosphooxy)-L-threonine (HTP) into 2-amino-3-oxo-4-(phosphooxy)butyric acid which spontaneously decarboxylates to form 3-amino-2-oxopropyl phosphate (AHAP). The protein is 4-hydroxythreonine-4-phosphate dehydrogenase of Helicobacter pylori (strain G27).